Consider the following 422-residue polypeptide: Solute carrier family 35 member D3 (422 aa).

The next 10 helical transmembrane spans lie at 9–29 (VLGI…NILL), 38–58 (FSFL…SLEL), 64–84 (LIAV…VAVL), 103–123 (MYVV…VLVL), 131–151 (GVLA…AGDL), 155–175 (PIGY…LVLI), 187–207 (LTAQ…CSFA), 224–244 (AMVS…FTTL), 257–277 (FVGV…FSDV), and 280–300 (TSLF…YCVA). Positions 339 to 365 (AKSGNSEPESAEGAGDSVQQGGQESRG) are disordered. Polar residues predominate over residues 355–364 (SVQQGGQESR).

The protein belongs to the TPT transporter family. SLC35D subfamily. In terms of assembly, could interact with ATG14, BECN1 and PIK3C3 that form the PI3KC3-C1/AIC/autophagy initiation complex; enhancing the formation of the AIC and promoting autophagy. As to expression, expressed in brain. Expressed in subsets of dopaminergic neurons. Expressed in maturing megakaryocytes.

The protein resides in the cytoplasmic vesicle. It localises to the secretory vesicle. Its subcellular location is the synaptic vesicle membrane. It is found in the early endosome membrane. The protein localises to the endoplasmic reticulum membrane. It carries out the reaction UDP-alpha-D-glucose(in) = UDP-alpha-D-glucose(out). With respect to regulation, inhibited by proton uncouplers that directly abolish the proton electrochemical gradient. Its function is as follows. Probable UDP-glucose transmembrane transporter involved in UDP-glucose transport from the cytosol to the lumen of synaptic vesicles. It is involved in platelet dense granules maturation. In terms of biological role, alternatively, could function as a molecular adapter enhancing the formation of the PI3KC3-C1/AIC/autophagy initiation complex to promote autophagy in dopaminergic neurons. Could also regulate the plasma membrane localization of the D(1A) dopamine receptor/DRD1 and dopamine signaling. The polypeptide is Solute carrier family 35 member D3 (Mus musculus (Mouse)).